Here is a 284-residue protein sequence, read N- to C-terminus: Urease accessory protein UreD (284 aa).

The protein belongs to the UreD family. In terms of assembly, ureD, UreF and UreG form a complex that acts as a GTP-hydrolysis-dependent molecular chaperone, activating the urease apoprotein by helping to assemble the nickel containing metallocenter of UreC. The UreE protein probably delivers the nickel.

The protein resides in the cytoplasm. Required for maturation of urease via the functional incorporation of the urease nickel metallocenter. In Bordetella bronchiseptica (strain ATCC BAA-588 / NCTC 13252 / RB50) (Alcaligenes bronchisepticus), this protein is Urease accessory protein UreD.